A 450-amino-acid polypeptide reads, in one-letter code: TNF receptor-associated factor family protein DDB_G0273433/DDB_G0273509 (450 aa).

The RING-type; degenerate zinc finger occupies 26-73 (CQICFNSVIDFKKETLSFDVLQCRNGHISCHECWNRQLSIKQECPSCK). 2 consecutive TRAF-type zinc fingers follow at residues 129–185 (HHLK…KKLN) and 186–243 (KHIE…SQLS). A coiled-coil region spans residues 257–297 (QNVMDLHKLQLDECNQDYRKLEKQNRDLEKRLFYLESTVNS). Positions 319–439 (VYKGKWVINN…NNSLTISISI (121 aa)) constitute an MATH domain.

This sequence belongs to the TNF receptor-associated factor family. A subfamily.

The protein resides in the cytoplasm. Its function is as follows. Probable adapter protein and signal transducer that links members of the tumor necrosis factor receptor family to different signaling pathways by association with the receptor cytoplasmic domain and kinases. The protein is TNF receptor-associated factor family protein DDB_G0273433/DDB_G0273509 of Dictyostelium discoideum (Social amoeba).